Here is a 208-residue protein sequence, read N- to C-terminus: Uracil phosphoribosyltransferase (208 aa).

5-phospho-alpha-D-ribose 1-diphosphate contacts are provided by residues Arg78, Arg103, and 130 to 138; that span reads DPMLATGGS. Uracil is bound by residues Ile193 and 198-200; that span reads GDA. Asp199 is a 5-phospho-alpha-D-ribose 1-diphosphate binding site.

Belongs to the UPRTase family. The cofactor is Mg(2+).

It carries out the reaction UMP + diphosphate = 5-phospho-alpha-D-ribose 1-diphosphate + uracil. It functions in the pathway pyrimidine metabolism; UMP biosynthesis via salvage pathway; UMP from uracil: step 1/1. Its activity is regulated as follows. Allosterically activated by GTP. Catalyzes the conversion of uracil and 5-phospho-alpha-D-ribose 1-diphosphate (PRPP) to UMP and diphosphate. This Haemophilus ducreyi (strain 35000HP / ATCC 700724) protein is Uracil phosphoribosyltransferase.